We begin with the raw amino-acid sequence, 1606 residues long: E3 ubiquitin-protein ligase HECW1 (1606 aa).

The region spanning 182 to 318 is the C2 domain; it reads SAAPIFKSIG…LERHAIGDRV (137 aa). Disordered stretches follow at residues 349–418, 459–538, 566–672, and 730–815; these read DDEE…PAEE, AEQL…CSLP, LLHS…SCEG, and STVF…SQLP. The segment covering 354 to 373 has biased composition (polar residues); sequence SLSTEPESAQIQDSPMNNLM. Residues 380 to 392 show a composition bias toward basic and acidic residues; that stretch reads PRSEAPESSESWK. 2 stretches are compositionally biased toward acidic residues: residues 500–511 and 579–588; these read EEEEKEQEEEGD and AEEEDGAEEE. Residues 589–600 show a composition bias toward basic and acidic residues; sequence STLKDSSEKDGL. Positions 612 to 621 are enriched in acidic residues; that stretch reads ALEEDREEPE. Polar residues-rich tracts occupy residues 651-663, 751-765, and 806-815; these read HPST…SSPR, DSMQ…STNG, and HNSQPVSQLP. In terms of domain architecture, WW 1 spans 829-862; it reads EPLPPNWEARIDSHGRVFYVDHVNRTTTWQRPTA. Positions 870–901 form a coiled coil; the sequence is RRSGSIQQMEQLNRRYQNIQRTIATERSEEDS. Residues Ser-874, Ser-937, and Ser-939 each carry the phosphoserine modification. Residues 894–938 form a disordered region; that stretch reads TERSEEDSGSQSCEQAPAGGGGGGGSDSEAESSQSSLDLRREGSL. Positions 1018 to 1051 constitute a WW 2 domain; sequence LELPRGWEIKTDQQGKSFFVDHNSRATTFIDPRI. The 336-residue stretch at 1271 to 1606 folds into the HECT domain; sequence SRKELQRNKL…VEETSTFGLE (336 aa). Residue Cys-1574 is the Glycyl thioester intermediate of the active site.

In terms of assembly, interacts with DVL1 and SSR3. Also interacts with mutant SOD1. In terms of tissue distribution, predominantly expressed in neurons of adult and fetal brain. Weakly expressed in the kidney.

The protein resides in the cytoplasm. It catalyses the reaction S-ubiquitinyl-[E2 ubiquitin-conjugating enzyme]-L-cysteine + [acceptor protein]-L-lysine = [E2 ubiquitin-conjugating enzyme]-L-cysteine + N(6)-ubiquitinyl-[acceptor protein]-L-lysine.. It functions in the pathway protein modification; protein ubiquitination. Its function is as follows. E3 ubiquitin-protein ligase that mediates ubiquitination and subsequent degradation of DVL1. Also targets the mutant SOD1 protein involved in familial amyotrophic lateral sclerosis (FALS). Forms cytotoxic aggregates with DVL1, SSR3 and mutant SOD1 that lead to motor neuron death in FALS. This Homo sapiens (Human) protein is E3 ubiquitin-protein ligase HECW1 (HECW1).